The following is a 448-amino-acid chain: VGFKAGVKDYKLTYYTPDYETKDTDILAAFRVSPQPGVPPEEAGAAVAAESSTGTWTTVWTDGLTSLDRYKGRCYHIEPVAGEENQYIAYVAYPLDLFEEGSVTNMFTSIVGNVFGFKALRALRLEDLRIPPAYAKTFQGPPHGIQVERDKLNKYGRPLLGCTIKPKLGLSAKNYGRAVYECLRGGLDFTKDDENVNSQPFMRWRDRFLFCAEAIYKAQAETGEIKGHYLNATAGTCEEMIKRAVFARELGVPIVMHDYLTGGFTANTSLAHYCRDNGLLLHIHRAMHAVIDRQKNHGIHFRVLAKALRMSGGDHIHSGTVVGKLEGEREITLGFVDLLRDDFIEKDRSRGIYFTQDWVSLPGVLPVASGGIHVWHMPALTEIFGDDSVLQFGGGTLGHPWGNAPGAVANRVALEACVQARNEGRDLAREGNEIIREASKWSPELAAA.

Lys4 carries the N6,N6,N6-trimethyllysine modification. Residues Asn113 and Thr163 each coordinate substrate. The active-site Proton acceptor is Lys165. Lys167 is a binding site for substrate. Mg(2+) is bound by residues Lys191, Asp193, and Glu194. At Lys191 the chain carries N6-carboxylysine. The active-site Proton acceptor is the His284. Substrate-binding residues include Arg285, His317, and Ser369.

This sequence belongs to the RuBisCO large chain family. Type I subfamily. Heterohexadecamer of 8 large chains and 8 small chains; disulfide-linked. The disulfide link is formed within the large subunit homodimers. Mg(2+) serves as cofactor. The disulfide bond which can form in the large chain dimeric partners within the hexadecamer appears to be associated with oxidative stress and protein turnover.

Its subcellular location is the plastid. It is found in the chloroplast. It catalyses the reaction 2 (2R)-3-phosphoglycerate + 2 H(+) = D-ribulose 1,5-bisphosphate + CO2 + H2O. The catalysed reaction is D-ribulose 1,5-bisphosphate + O2 = 2-phosphoglycolate + (2R)-3-phosphoglycerate + 2 H(+). Functionally, ruBisCO catalyzes two reactions: the carboxylation of D-ribulose 1,5-bisphosphate, the primary event in carbon dioxide fixation, as well as the oxidative fragmentation of the pentose substrate in the photorespiration process. Both reactions occur simultaneously and in competition at the same active site. The chain is Ribulose bisphosphate carboxylase large chain from Eucryphia lucida (Leatherwood).